The sequence spans 206 residues: N-(5'-phosphoribosyl)anthranilate isomerase (206 aa).

This sequence belongs to the TrpF family.

It catalyses the reaction N-(5-phospho-beta-D-ribosyl)anthranilate = 1-(2-carboxyphenylamino)-1-deoxy-D-ribulose 5-phosphate. Its pathway is amino-acid biosynthesis; L-tryptophan biosynthesis; L-tryptophan from chorismate: step 3/5. This chain is N-(5'-phosphoribosyl)anthranilate isomerase, found in Pseudomonas putida (strain ATCC 700007 / DSM 6899 / JCM 31910 / BCRC 17059 / LMG 24140 / F1).